The primary structure comprises 380 residues: RNA binding protein fox-1 homolog 2 (380 aa).

Composition is skewed to polar residues over residues Met-1–Thr-20 and Asn-36–Glu-56. Residues Met-1–Ile-117 form a disordered region. The span at Ser-72–Asn-102 shows a compositional bias: low complexity. In terms of domain architecture, RRM spans Lys-110 to Ala-186.

It is found in the nucleus. The protein resides in the cytoplasm. Its function is as follows. RNA-binding protein that regulates alternative splicing events by binding to 5'-UGCAUGU-3' elements. Regulates alternative splicing of tissue-specific exons. This is RNA binding protein fox-1 homolog 2 (rbfox2) from Xenopus tropicalis (Western clawed frog).